Reading from the N-terminus, the 328-residue chain is Beta-ketoacyl-[acyl-carrier-protein] synthase III (328 aa).

Active-site residues include C122 and H255. The tract at residues 256 to 260 (QANIR) is ACP-binding. The active site involves N285.

It belongs to the thiolase-like superfamily. FabH family. In terms of assembly, homodimer.

The protein localises to the cytoplasm. It carries out the reaction malonyl-[ACP] + acetyl-CoA + H(+) = 3-oxobutanoyl-[ACP] + CO2 + CoA. It participates in lipid metabolism; fatty acid biosynthesis. Catalyzes the condensation reaction of fatty acid synthesis by the addition to an acyl acceptor of two carbons from malonyl-ACP. Catalyzes the first condensation reaction which initiates fatty acid synthesis and may therefore play a role in governing the total rate of fatty acid production. Possesses both acetoacetyl-ACP synthase and acetyl transacylase activities. Its substrate specificity determines the biosynthesis of branched-chain and/or straight-chain of fatty acids. This chain is Beta-ketoacyl-[acyl-carrier-protein] synthase III, found in Polynucleobacter asymbioticus (strain DSM 18221 / CIP 109841 / QLW-P1DMWA-1) (Polynucleobacter necessarius subsp. asymbioticus).